Consider the following 395-residue polypeptide: MNAADRMGARVALLLLLVLGSPQSGVHGEEGLDFPEYDGVDRVINVNAKNYKNVFKKYEVLALLYHEPPEDDKASQRQFEMEELILELAAQVLEDKGVGFGLVDSEKDAAVAKKLGLTEEDSIYVFKEDEVIEYDGEFSADTLVEFLLDVLEDPVELIEGERELQAFENIEDEIKLIGYFKNKDSEHYKAFKEAAEEFHPYIPFFATFDSKVAKKLTLKLNEIDFYEAFMEEPVTIPDKPNSEEEIVNFVEEHRRSTLRKLKPESMYETWEDDMDGIHIVAFAEEADPDGYEFLEILKSVAQDNTDNPDLSIIWIDPDDFPLLVPYWEKTFDIDLSAPQIGVVNVTDADSVWMEMDDEEDLPSAEELEDWLEDVLEGEINTEDDDDEDDDDDDDD.

Positions 1–28 (MNAADRMGARVALLLLLVLGSPQSGVHG) are cleaved as a signal peptide. Residue Y37 is modified to Phosphotyrosine. S75 bears the Phosphoserine mark. T118 carries the phosphothreonine modification. Phosphoserine is present on S210. N344 is a glycosylation site (N-linked (GlcNAc...) asparagine). A disordered region spans residues 376 to 395 (EGEINTEDDDDEDDDDDDDD).

It belongs to the calsequestrin family. In terms of assembly, monomer; increases in response to a depletion of intracellular calcium. Homodimer. Homotetramer and homopolymer. Can form linear homooligomers. Ca(2+) ions promote oligomerization. Interacts (via C-terminal end and preferentially with the monomeric form) with STIM1; this interaction increases in response to a depletion of intracellular calcium, decreases both STIM1 aggregation and clustering, interaction of STIM1 with ORAI1 and store-operated Ca(2+) entry (SOCE) activity. Interacts with ASPH and TRDN. N-glycosylated. In terms of tissue distribution, detected in skeletal muscle (at protein level). Detected in skeletal muscle.

It is found in the endoplasmic reticulum. Its subcellular location is the sarcoplasmic reticulum. The protein resides in the sarcoplasmic reticulum lumen. It localises to the mitochondrion matrix. The protein localises to the sarcoplasmic reticulum membrane. Calsequestrin is a high-capacity, moderate affinity, calcium-binding protein and thus acts as an internal calcium store in muscle. Calcium ions are bound by clusters of acidic residues at the protein surface, often at the interface between subunits. Can bind around 80 Ca(2+) ions. Regulates the release of lumenal Ca(2+) via the calcium release channel RYR1; this plays an important role in triggering muscle contraction. Negatively regulates store-operated Ca(2+) entry (SOCE) activity. The sequence is that of Calsequestrin-1 (CASQ1) from Oryctolagus cuniculus (Rabbit).